Reading from the N-terminus, the 160-residue chain is Conopressin/conophysin, isoform 2 (160 aa).

Residues 1 to 30 (MKCSVLQMSRLSWAMCLMLLMLLLLGTAQG) form the signal peptide. A disulfide bridge links Cys31 with Cys36. Residue Gly39 is modified to Glycine amide. A propeptide spanning residues 40-47 (GKRAVDAL) is cleaved from the precursor. Disulfide bonds link Cys53–Cys97, Cys56–Cys70, Cys64–Cys87, Cys71–Cys77, Cys104–Cys118, Cys112–Cys130, and Cys119–Cys124.

It belongs to the vasopressin/oxytocin family. Expressed by the venom gland.

Its subcellular location is the secreted. In terms of biological role, targets vasopressin-oxytocin related receptors. The sequence is that of Conopressin/conophysin, isoform 2 from Conus monile (Necklace cone).